Reading from the N-terminus, the 605-residue chain is Lysophospholipase 1 (605 aa).

Residues 1–17 (MILHHLLILLIINYCVA) form the signal peptide. The 536-residue stretch at 30-565 (SCPSSQLIRS…ENYCWDGTIY (536 aa)) folds into the PLA2c domain. N-linked (GlcNAc...) asparagine glycans are attached at residues Asn199, Asn261, Asn399, Asn451, Asn465, Asn492, and Asn573.

The protein belongs to the lysophospholipase family.

Its subcellular location is the secreted. The enzyme catalyses a 1-acyl-sn-glycero-3-phosphocholine + H2O = sn-glycerol 3-phosphocholine + a fatty acid + H(+). Its function is as follows. Catalyzes the release of fatty acids from lysophospholipids. Phospholipase B may well contribute to pathogenicity by abetting the fungus in damaging and traversing host cell membranes, processes which likely increase the rapidity of disseminated infection. This is Lysophospholipase 1 from Candida albicans (strain SC5314 / ATCC MYA-2876) (Yeast).